Consider the following 515-residue polypeptide: Maturase K (515 aa).

It belongs to the intron maturase 2 family. MatK subfamily.

It localises to the plastid. The protein localises to the chloroplast. Usually encoded in the trnK tRNA gene intron. Probably assists in splicing its own and other chloroplast group II introns. The sequence is that of Maturase K from Larix laricina (Tamarack).